Here is a 272-residue protein sequence, read N- to C-terminus: 3-methyl-2-oxobutanoate hydroxymethyltransferase (272 aa).

Aspartate 43 and aspartate 82 together coordinate Mg(2+). 3-methyl-2-oxobutanoate contacts are provided by residues 43-44 (DS), aspartate 82, and lysine 112. Glutamate 114 contacts Mg(2+). The active-site Proton acceptor is the glutamate 179.

It belongs to the PanB family. Homodecamer; pentamer of dimers. The cofactor is Mg(2+).

Its subcellular location is the cytoplasm. It catalyses the reaction 3-methyl-2-oxobutanoate + (6R)-5,10-methylene-5,6,7,8-tetrahydrofolate + H2O = 2-dehydropantoate + (6S)-5,6,7,8-tetrahydrofolate. Its pathway is cofactor biosynthesis; (R)-pantothenate biosynthesis; (R)-pantoate from 3-methyl-2-oxobutanoate: step 1/2. Its function is as follows. Catalyzes the reversible reaction in which hydroxymethyl group from 5,10-methylenetetrahydrofolate is transferred onto alpha-ketoisovalerate to form ketopantoate. This chain is 3-methyl-2-oxobutanoate hydroxymethyltransferase, found in Staphylococcus aureus (strain JH1).